The primary structure comprises 568 residues: Proline--tRNA ligase (568 aa).

It belongs to the class-II aminoacyl-tRNA synthetase family. ProS type 1 subfamily. Homodimer.

Its subcellular location is the cytoplasm. The catalysed reaction is tRNA(Pro) + L-proline + ATP = L-prolyl-tRNA(Pro) + AMP + diphosphate. Functionally, catalyzes the attachment of proline to tRNA(Pro) in a two-step reaction: proline is first activated by ATP to form Pro-AMP and then transferred to the acceptor end of tRNA(Pro). As ProRS can inadvertently accommodate and process non-cognate amino acids such as alanine and cysteine, to avoid such errors it has two additional distinct editing activities against alanine. One activity is designated as 'pretransfer' editing and involves the tRNA(Pro)-independent hydrolysis of activated Ala-AMP. The other activity is designated 'posttransfer' editing and involves deacylation of mischarged Ala-tRNA(Pro). The misacylated Cys-tRNA(Pro) is not edited by ProRS. The polypeptide is Proline--tRNA ligase (Halothermothrix orenii (strain H 168 / OCM 544 / DSM 9562)).